The chain runs to 148 residues: Ubiquitin-conjugating enzyme E2 5B (148 aa).

One can recognise a UBC core domain in the interval methionine 1–methionine 147. Cysteine 85 serves as the catalytic Glycyl thioester intermediate.

Belongs to the ubiquitin-conjugating enzyme family.

It catalyses the reaction S-ubiquitinyl-[E1 ubiquitin-activating enzyme]-L-cysteine + [E2 ubiquitin-conjugating enzyme]-L-cysteine = [E1 ubiquitin-activating enzyme]-L-cysteine + S-ubiquitinyl-[E2 ubiquitin-conjugating enzyme]-L-cysteine.. Its pathway is protein modification; protein ubiquitination. In terms of biological role, E2 conjugating enzyme that associates with the E3 ubiquitin-protein ligase EL5 to mediate ubiquitination of target proteins. This is Ubiquitin-conjugating enzyme E2 5B (UBC5B) from Oryza sativa subsp. japonica (Rice).